A 236-amino-acid chain; its full sequence is Purine nucleoside phosphorylase DeoD-type 2 (236 aa).

Residue His5 participates in a purine D-ribonucleoside binding. Phosphate is bound by residues Gly21, Arg25, Arg44, and 88–91 (RVGS). Residues 180-182 (DME) and 204-205 (SD) each bind a purine D-ribonucleoside. The Proton donor role is filled by Asp205.

The protein belongs to the PNP/UDP phosphorylase family. Homohexamer; trimer of homodimers.

It carries out the reaction a purine D-ribonucleoside + phosphate = a purine nucleobase + alpha-D-ribose 1-phosphate. It catalyses the reaction a purine 2'-deoxy-D-ribonucleoside + phosphate = a purine nucleobase + 2-deoxy-alpha-D-ribose 1-phosphate. Functionally, catalyzes the reversible phosphorolytic breakdown of the N-glycosidic bond in the beta-(deoxy)ribonucleoside molecules, with the formation of the corresponding free purine bases and pentose-1-phosphate. The sequence is that of Purine nucleoside phosphorylase DeoD-type 2 from Photobacterium profundum (strain SS9).